A 485-amino-acid chain; its full sequence is Glutamyl-tRNA(Gln) amidotransferase subunit A (485 aa).

Catalysis depends on charge relay system residues K75 and S150. Residue S174 is the Acyl-ester intermediate of the active site.

This sequence belongs to the amidase family. GatA subfamily. Heterotrimer of A, B and C subunits.

The catalysed reaction is L-glutamyl-tRNA(Gln) + L-glutamine + ATP + H2O = L-glutaminyl-tRNA(Gln) + L-glutamate + ADP + phosphate + H(+). Functionally, allows the formation of correctly charged Gln-tRNA(Gln) through the transamidation of misacylated Glu-tRNA(Gln) in organisms which lack glutaminyl-tRNA synthetase. The reaction takes place in the presence of glutamine and ATP through an activated gamma-phospho-Glu-tRNA(Gln). This Picosynechococcus sp. (strain ATCC 27264 / PCC 7002 / PR-6) (Agmenellum quadruplicatum) protein is Glutamyl-tRNA(Gln) amidotransferase subunit A.